Here is a 566-residue protein sequence, read N- to C-terminus: Chaperone Ric-8 (566 aa).

It belongs to the synembryn family. As to quaternary structure, interacts with GDP-bound G(i)-alpha protein. Does not interact with G-alpha proteins when they are in complex with subunits beta and gamma. Interacts with Frq2 in a Ca(2+)-independent manner but does not interact with Frq1.

Its subcellular location is the cytoplasm. The protein resides in the cell cortex. It is found in the presynapse. In terms of biological role, chaperone that specifically binds and folds some, but not all, nascent G alpha proteins prior to G protein heterotrimer formation, promoting their stability and activity. Also acts as a guanine nucleotide exchange factor (GEF) for G alpha proteins by stimulating exchange of bound GDP for free GTP. Plays a key role in asymmetric spindle positioning, a step for asymmetric cell division that generates cell diversity during development by activating G(i) alpha protein independently of G-protein coupled receptors. Required during gastrulation and sensory organ precursor (SOP) formation. Plays a role in positively regulating synapse number and neurotransmitter release. In Drosophila pseudoobscura pseudoobscura (Fruit fly), this protein is Chaperone Ric-8 (ric8a).